The following is a 143-amino-acid chain: Large ribosomal subunit protein uL15 (143 aa).

A disordered region spans residues 1–54 (MQLNSIKPAPGAKHPKRRVGRGIGSGLGKTAGRGHKGQKSRAGGFHKVGFEGGQ). The span at 21–31 (RGIGSGLGKTA) shows a compositional bias: gly residues.

It belongs to the universal ribosomal protein uL15 family. As to quaternary structure, part of the 50S ribosomal subunit.

In terms of biological role, binds to the 23S rRNA. The sequence is that of Large ribosomal subunit protein uL15 from Nitrosospira multiformis (strain ATCC 25196 / NCIMB 11849 / C 71).